Reading from the N-terminus, the 459-residue chain is ATP-dependent 6-phosphofructokinase (459 aa).

Residues G89, 154–155 (RG), and 179–182 (GDGG) each bind ATP. D180 provides a ligand contact to Mg(2+). Substrate-binding positions include 208–210 (TID), 253–255 (MGR), E309, and 368–371 (YAIR). Residue D210 is the Proton acceptor of the active site.

This sequence belongs to the phosphofructokinase type A (PFKA) family. PPi-dependent PFK group II subfamily. Atypical ATP-dependent clade 'X' sub-subfamily. In terms of assembly, homodimer. Mg(2+) serves as cofactor.

The protein resides in the cytoplasm. It catalyses the reaction beta-D-fructose 6-phosphate + ATP = beta-D-fructose 1,6-bisphosphate + ADP + H(+). Its pathway is carbohydrate degradation; glycolysis; D-glyceraldehyde 3-phosphate and glycerone phosphate from D-glucose: step 3/4. With respect to regulation, AMP causes 20-40% inhibition and diphosphate causes 20-50% inhibition. ADP, citrate, PEP and FBP have no effect. Functionally, catalyzes the phosphorylation of D-fructose 6-phosphate to fructose 1,6-bisphosphate by ATP, the first committing step of glycolysis. This is ATP-dependent 6-phosphofructokinase from Amycolatopsis methanolica.